The following is a 369-amino-acid chain: Guanine nucleotide-binding protein subunit beta-2 (369 aa).

Polar residues predominate over residues 1–24 (MSTIAGESSSSSKMPENSQPTTTE). A disordered region spans residues 1-28 (MSTIAGESSSSSKMPENSQPTTTEKGSE). WD repeat units follow at residues 79-109 (GHVG…IVWD), 121-151 (MPTT…SVVP), 167-197 (THTS…AIWD), 209-241 (GHTG…LVWD), 253-283 (GHEA…RLFD), 297-327 (SILF…GVWD), and 339-369 (GHEN…RIWA).

This sequence belongs to the WD repeat G protein beta family. As to quaternary structure, g proteins are composed of 3 units, alpha, beta and gamma. Interacts with G protein gamma subunits gpc-1 and gpc-2 and with egl-10 and eat-16.

Guanine nucleotide-binding proteins (G proteins) are involved as a modulator or transducer in various transmembrane signaling systems. The beta and gamma chains are required for the GTPase activity, for replacement of GDP by GTP, and for G protein-effector interaction. Plays a role in regulating dopamine-mediated locomotion behavior. The protein is Guanine nucleotide-binding protein subunit beta-2 of Caenorhabditis elegans.